Here is a 102-residue protein sequence, read N- to C-terminus: COX assembly mitochondrial protein 2 homolog (102 aa).

The 45-residue stretch at 11–55 folds into the CHCH domain; sequence TKECNMLIEFLQRCHSEKPIGKMIGKCSYWDEAVWQCTKKERIWR. Short sequence motifs (cx9C motif) lie at residues 14 to 24 and 37 to 47; these read CNMLIEFLQRC and CSYWDEAVWQC. 2 disulfide bridges follow: C14–C47 and C24–C37.

It belongs to the CMC family.

It localises to the mitochondrion. Functionally, may be involved in cytochrome c oxidase biogenesis. The polypeptide is COX assembly mitochondrial protein 2 homolog (Caenorhabditis elegans).